The sequence spans 245 residues: tRNA pseudouridine synthase A (245 aa).

Asp52 (nucleophile) is an active-site residue. A substrate-binding site is contributed by Tyr111.

This sequence belongs to the tRNA pseudouridine synthase TruA family. As to quaternary structure, homodimer.

The enzyme catalyses uridine(38/39/40) in tRNA = pseudouridine(38/39/40) in tRNA. Formation of pseudouridine at positions 38, 39 and 40 in the anticodon stem and loop of transfer RNAs. In Wolbachia sp. subsp. Drosophila simulans (strain wRi), this protein is tRNA pseudouridine synthase A.